The following is a 285-amino-acid chain: Phosphatase YwpJ (285 aa).

The Nucleophile role is filled by D7. Position 7 (D7) interacts with Mg(2+). L8 is a binding site for phosphate. D9 contributes to the Mg(2+) binding site. Phosphate contacts are provided by residues 41–42 (TG) and K214. Mg(2+)-binding residues include D237 and S238. Phosphate contacts are provided by residues N240 and 282 to 283 (KH).

It belongs to the HAD-like hydrolase superfamily. Cof family. Mg(2+) is required as a cofactor.

Catalyzes the dephosphorylation of phosphorylated 5-6 carbon sugars and monophosphate nucleotides (NMP) in vitro. To a lesser extent, dephosphorylates flavin mononucleotide (FMN) in vitro. This is Phosphatase YwpJ (ywpJ) from Bacillus subtilis (strain 168).